The sequence spans 440 residues: uncharacterized protein (440 aa).

Residues 1-17 (MDRFFCTVWVWSVLFGA) form the signal peptide. C18 carries the N-palmitoyl cysteine lipid modification. C18 is lipidated: S-diacylglycerol cysteine. Residues 241-268 (SALQERPSSPEPVVSTIPSPEGEENSAA) are disordered.

Its subcellular location is the cell membrane. This is an uncharacterized protein from Treponema pallidum (strain Nichols).